The sequence spans 62 residues: uncharacterized protein (62 aa).

Residues 17-37 form a helical membrane-spanning segment; that stretch reads IVFFLGLVVVLLMMINLYMLI.

The protein resides in the membrane. This is an uncharacterized protein from Helicobacter pylori (strain J99 / ATCC 700824) (Campylobacter pylori J99).